Here is a 633-residue protein sequence, read N- to C-terminus: Pesticidal crystal protein Cry2Ad (633 aa).

This sequence belongs to the delta endotoxin family.

Its function is as follows. Promotes colloidosmotic lysis by binding to the midgut epithelial cells of insects. This Bacillus thuringiensis protein is Pesticidal crystal protein Cry2Ad (cry2Ad).